The primary structure comprises 549 residues: Chaperonin GroEL (549 aa).

ATP contacts are provided by residues 29 to 32, Lys-50, 86 to 90, Gly-418, and Asp-499; these read TAGP and DGTTT.

It belongs to the chaperonin (HSP60) family. In terms of assembly, forms a cylinder of 14 subunits composed of two heptameric rings stacked back-to-back. Interacts with the co-chaperonin GroES.

Its subcellular location is the cytoplasm. It catalyses the reaction ATP + H2O + a folded polypeptide = ADP + phosphate + an unfolded polypeptide.. In terms of biological role, together with its co-chaperonin GroES, plays an essential role in assisting protein folding. The GroEL-GroES system forms a nano-cage that allows encapsulation of the non-native substrate proteins and provides a physical environment optimized to promote and accelerate protein folding. This Wolbachia sp. subsp. Drosophila simulans (strain wRi) protein is Chaperonin GroEL.